The sequence spans 390 residues: MKATILASTFAAGALAQSGAWGQCGGNGWSGATSCISGYACNYVNDWYSQCQPGTAAPTTTAAATTLVTSTKTAPPASTTTATASGKFKWFGVNEAGGEFGDGIFPGRWGTEFTFPDTNTIQTLRSQGYNIFRVGFAMERLVPNTLTSSFDNGYLTNLTQVVNSVTNSGAYIVLDPHNYGRYYGKIITDTDAFKTFWQNVAAKFASNSKVIFDTNNEYNTMDQTLVLNLNQAAIDGIRAAGATSQYIFVEGNQWTGAWSWNVTNTNLAALTDPENKIVYEMHQYLDSDSSGTSTACVSSEIGVQRIVGATAWLRANGKKGVLGEFAGGANSVCKAAVTGLLEHLKANTDVWEGALWWAAGPWWGDYMYSFEPPSGTGYTYYNSLLKTYTP.

A signal peptide spans 1-16 (MKATILASTFAAGALA). One can recognise a CBM1 domain in the interval 17–52 (QSGAWGQCGGNGWSGATSCISGYACNYVNDWYSQCQ). Residues Asn-157 and Asn-261 are each glycosylated (N-linked (GlcNAc...) asparagine).

Belongs to the glycosyl hydrolase 5 (cellulase A) family. Post-translationally, N-glycosylated.

It localises to the secreted. The catalysed reaction is Endohydrolysis of (1-&gt;4)-beta-D-glucosidic linkages in cellulose, lichenin and cereal beta-D-glucans.. Endoglucanase that plays an important role in biomass degradation. Binds onto plant cell walls to participate in the hydrolysis of cellulose. The protein is Endoglucanase gh5-1 of Neurospora crassa (strain ATCC 24698 / 74-OR23-1A / CBS 708.71 / DSM 1257 / FGSC 987).